Reading from the N-terminus, the 284-residue chain is 1D-myo-inositol 2-acetamido-2-deoxy-alpha-D-glucopyranoside deacetylase (284 aa).

Residues His12, Asp15, and His146 each coordinate Zn(2+).

Belongs to the MshB deacetylase family. The cofactor is Zn(2+).

It carries out the reaction 1D-myo-inositol 2-acetamido-2-deoxy-alpha-D-glucopyranoside + H2O = 1D-myo-inositol 2-amino-2-deoxy-alpha-D-glucopyranoside + acetate. Functionally, catalyzes the deacetylation of 1D-myo-inositol 2-acetamido-2-deoxy-alpha-D-glucopyranoside (GlcNAc-Ins) in the mycothiol biosynthesis pathway. The sequence is that of 1D-myo-inositol 2-acetamido-2-deoxy-alpha-D-glucopyranoside deacetylase from Mycolicibacterium vanbaalenii (strain DSM 7251 / JCM 13017 / BCRC 16820 / KCTC 9966 / NRRL B-24157 / PYR-1) (Mycobacterium vanbaalenii).